Here is a 169-residue protein sequence, read N- to C-terminus: MTVANRRIAVYPGTFDPITNGHIDLVSRAAPLFEKVVVGVAQSPSKGPALPLEQRVQLARGALGHHSNVEVIGFDTLLAHFVRSVQGGVLLRGLRAVSDFEYEFQMASMNRHLIPEVETLFLTPAEQHSFISSSLVREIARLGGDVSGFVPAAVLEALRKVREAKSAQS.

T14 is a substrate binding site. ATP contacts are provided by residues 14–15 and H22; that span reads TF. Substrate contacts are provided by K46, L78, and R92. ATP contacts are provided by residues 93–95, E103, and 128–134; these read GLR and HSFISSS.

It belongs to the bacterial CoaD family. In terms of assembly, homohexamer. The cofactor is Mg(2+).

It is found in the cytoplasm. The enzyme catalyses (R)-4'-phosphopantetheine + ATP + H(+) = 3'-dephospho-CoA + diphosphate. It participates in cofactor biosynthesis; coenzyme A biosynthesis; CoA from (R)-pantothenate: step 4/5. In terms of biological role, reversibly transfers an adenylyl group from ATP to 4'-phosphopantetheine, yielding dephospho-CoA (dPCoA) and pyrophosphate. This is Phosphopantetheine adenylyltransferase from Stenotrophomonas maltophilia (strain R551-3).